The following is a 330-amino-acid chain: Peroxidase 42 (330 aa).

Positions 1–23 (MGGKGVMMVAILCLWALSATSEA) are cleaved as a signal peptide. 4 cysteine pairs are disulfide-bonded: C40–C119, C73–C78, C125–C323, and C204–C231. Residue H71 is the Proton acceptor of the active site. 4 residues coordinate Ca(2+): D72, V75, D79, and S81. P167 is a binding site for substrate. A glycan (N-linked (GlcNAc...) asparagine) is linked at N170. H197 serves as a coordination point for heme b. Ca(2+) is bound at residue S198. Positions 247, 250, and 255 each coordinate Ca(2+).

It belongs to the peroxidase family. Classical plant (class III) peroxidase subfamily. The cofactor is heme b. Ca(2+) is required as a cofactor. As to expression, constitutively expressed in the whole plant, with the highest expression in roots.

The protein localises to the secreted. It carries out the reaction 2 a phenolic donor + H2O2 = 2 a phenolic radical donor + 2 H2O. Its function is as follows. Removal of H(2)O(2), oxidation of toxic reductants, biosynthesis and degradation of lignin, suberization, auxin catabolism, response to environmental stresses such as wounding, pathogen attack and oxidative stress. These functions might be dependent on each isozyme/isoform in each plant tissue. Might function as heat shock-like defense protein. This is Peroxidase 42 (PER42) from Arabidopsis thaliana (Mouse-ear cress).